Consider the following 279-residue polypeptide: Shikimate dehydrogenase (NADP(+)) (279 aa).

Shikimate is bound by residues 14–16 (SLS) and T62. K66 (proton acceptor) is an active-site residue. N87 and D103 together coordinate shikimate. NADP(+)-binding positions include 127–131 (GAGGA), 151–156 (NRTKAK), and M215. Y217 lines the shikimate pocket. G239 lines the NADP(+) pocket.

The protein belongs to the shikimate dehydrogenase family. As to quaternary structure, homodimer.

It carries out the reaction shikimate + NADP(+) = 3-dehydroshikimate + NADPH + H(+). It functions in the pathway metabolic intermediate biosynthesis; chorismate biosynthesis; chorismate from D-erythrose 4-phosphate and phosphoenolpyruvate: step 4/7. Functionally, involved in the biosynthesis of the chorismate, which leads to the biosynthesis of aromatic amino acids. Catalyzes the reversible NADPH linked reduction of 3-dehydroshikimate (DHSA) to yield shikimate (SA). The chain is Shikimate dehydrogenase (NADP(+)) from Alteromonas mediterranea (strain DSM 17117 / CIP 110805 / LMG 28347 / Deep ecotype).